We begin with the raw amino-acid sequence, 139 residues long: D-ribose pyranase (139 aa).

The active-site Proton donor is His20. Residues Asp28, His106, and 128–130 (YAN) contribute to the substrate site.

This sequence belongs to the RbsD / FucU family. RbsD subfamily. Homodecamer.

Its subcellular location is the cytoplasm. It carries out the reaction beta-D-ribopyranose = beta-D-ribofuranose. It participates in carbohydrate metabolism; D-ribose degradation; D-ribose 5-phosphate from beta-D-ribopyranose: step 1/2. Its function is as follows. Catalyzes the interconversion of beta-pyran and beta-furan forms of D-ribose. The sequence is that of D-ribose pyranase from Aliivibrio fischeri (strain ATCC 700601 / ES114) (Vibrio fischeri).